We begin with the raw amino-acid sequence, 647 residues long: Macrolide export ATP-binding/permease protein MacB (647 aa).

The ABC transporter domain maps to 6–244 (LEISGCYRTF…VDTAVTKINN (239 aa)). Residue 42–49 (GASGSGKS) coordinates ATP. The next 4 membrane-spanning stretches (helical) occupy residues 273–293 (FLTM…VALG), 522–542 (LLIS…VMNI), 577–597 (LVCL…GVVF), and 612–632 (SIVA…FLPA).

Belongs to the ABC transporter superfamily. Macrolide exporter (TC 3.A.1.122) family. Homodimer. Part of the tripartite efflux system MacAB-TolC, which is composed of an inner membrane transporter, MacB, a periplasmic membrane fusion protein, MacA, and an outer membrane component, TolC. The complex forms a large protein conduit and can translocate molecules across both the inner and outer membranes. Interacts with MacA.

It is found in the cell inner membrane. Its function is as follows. Part of the tripartite efflux system MacAB-TolC. MacB is a non-canonical ABC transporter that contains transmembrane domains (TMD), which form a pore in the inner membrane, and an ATP-binding domain (NBD), which is responsible for energy generation. Confers resistance against macrolides. The sequence is that of Macrolide export ATP-binding/permease protein MacB from Shewanella sp. (strain W3-18-1).